Consider the following 66-residue polypeptide: Cell division protein ZapB (66 aa).

Residues 3 to 59 (LELLSQLETKIQATLENIELLKMELEEEKQKSTQLAEKNQKLQQDLNSWSDKVNGLV) are a coiled coil.

Belongs to the ZapB family. In terms of assembly, homodimer. The ends of the coiled-coil dimer bind to each other, forming polymers. Interacts with FtsZ.

The protein resides in the cytoplasm. In terms of biological role, non-essential, abundant cell division factor that is required for proper Z-ring formation. It is recruited early to the divisome by direct interaction with FtsZ, stimulating Z-ring assembly and thereby promoting cell division earlier in the cell cycle. Its recruitment to the Z-ring requires functional FtsA or ZipA. The chain is Cell division protein ZapB from Shewanella denitrificans (strain OS217 / ATCC BAA-1090 / DSM 15013).